The following is a 389-amino-acid chain: MSQFVLPAVASEGIINWPFLTGFMLGQFSVGLVLLIFVRFFIFSDQTEPDINTQRRTAKVLPTGNPSTDAILEKTYYNTKTHQPESLDWFSVLVAQALYQLRDEVRGNDEVLERLNEILKSDKLPGFLDTINVVDLDIGDAFPQFGACKVNKDESGDLEAEIKVSLEDTIKLGVETKMLLNFPIPKFASVPVSLSVSLVKFSGTLTVAIRSAFNSGEANRVLVSFAPDYELQWKIESSVGSTQKLQNAEKISRLIESRIRRWFKDRCVYPEYQQFELPKLWRKTSAPPPSAGAGTGTSTGVPPSPFPQPANPSSVPKPLELPGGFPHRNMSMSSQRPNINNPKFIRSMSVNTRPTYSSSFYEMQGTAGSSSGSAVADEAYRSLQTSPRR.

Over 1–22 the chain is Lumenal; that stretch reads MSQFVLPAVASEGIINWPFLTG. A helical membrane pass occupies residues 23–43; it reads FMLGQFSVGLVLLIFVRFFIF. Residues 44–389 are Cytoplasmic-facing; sequence SDQTEPDINT…YRSLQTSPRR (346 aa). One can recognise an SMP-LTD domain in the interval 83-278; it reads QPESLDWFSV…YPEYQQFELP (196 aa). Disordered stretches follow at residues 283–345 and 360–389; these read KTSA…PKFI and FYEMQGTAGSSSGSAVADEAYRSLQTSPRR. Positions 330 to 341 are enriched in polar residues; sequence MSMSSQRPNINN.

The protein belongs to the MMM1 family. Homodimer. Component of the ER-mitochondria encounter structure (ERMES) or MDM complex, composed of MMM1, MDM10, MDM12 and MDM34. An MMM1 homodimer associates with one molecule of MDM12 on each side in a pairwise head-to-tail manner, and the SMP-LTD domains of MMM1 and MDM12 generate a continuous hydrophobic tunnel for phospholipid trafficking.

The protein localises to the endoplasmic reticulum membrane. Functionally, component of the ERMES/MDM complex, which serves as a molecular tether to connect the endoplasmic reticulum (ER) and mitochondria. Components of this complex are involved in the control of mitochondrial shape and protein biogenesis, and function in nonvesicular lipid trafficking between the ER and mitochondria. The MDM12-MMM11 subcomplex functions in the major beta-barrel assembly pathway that is responsible for biogenesis of all outer membrane beta-barrel proteins, and acts in a late step after the SAM complex. The MDM10-MDM12-MMM1 subcomplex further acts in the TOM40-specific pathway after the action of the MDM12-MMM1 complex. Essential for establishing and maintaining the structure of mitochondria and maintenance of mtDNA nucleoids. The polypeptide is Maintenance of mitochondrial morphology protein 1-1 (Yarrowia lipolytica (strain CLIB 122 / E 150) (Yeast)).